The sequence spans 179 residues: Probable inosine/xanthosine triphosphatase (179 aa).

Residue 13–18 (STNPVK) coordinates substrate. Glutamine 70 is a binding site for Mg(2+).

This sequence belongs to the YjjX NTPase family. As to quaternary structure, homodimer. Mg(2+) serves as cofactor. Mn(2+) is required as a cofactor.

The enzyme catalyses XTP + H2O = XDP + phosphate + H(+). The catalysed reaction is ITP + H2O = IDP + phosphate + H(+). In terms of biological role, phosphatase that hydrolyzes non-canonical purine nucleotides such as XTP and ITP to their respective diphosphate derivatives. Probably excludes non-canonical purines from DNA/RNA precursor pool, thus preventing their incorporation into DNA/RNA and avoiding chromosomal lesions. The polypeptide is Probable inosine/xanthosine triphosphatase (Methanocaldococcus jannaschii (strain ATCC 43067 / DSM 2661 / JAL-1 / JCM 10045 / NBRC 100440) (Methanococcus jannaschii)).